A 914-amino-acid chain; its full sequence is Protein GAMETE EXPRESSED 2 (914 aa).

Filamin repeat units lie at residues 249–382 (IGYC…IKEV) and 391–485 (ACSV…DVNV). The helical transmembrane segment at 893–913 (LVVVPFSFFSIKLFSLLMVLI) threads the bilayer.

In tricellular pollen, expressed in mature sperm cells but not in the vegetative cell. In bicellular pollen, detected in the progenitor generative cell. Detected in the egg cell within the female gametophyte.

Its subcellular location is the cell membrane. The chain is Protein GAMETE EXPRESSED 2 (GEX2) from Arabidopsis thaliana (Mouse-ear cress).